The sequence spans 619 residues: Hypermethylated in cancer 2 protein (619 aa).

One can recognise a BTB domain in the interval 46-109 (CDVIIMVENS…IYTGKLLPSD (64 aa)). Phosphoserine occurs at positions 166, 169, and 197. Disordered stretches follow at residues 180–293 (DVRK…VGNS) and 307–426 (MDVE…GHTG). Over residues 214-228 (LGLGGPAGGEMGLGG) the composition is skewed to gly residues. Positions 247-249 (DLS) are binding to CtBP. Over residues 281-293 (APTSTSALPVGNS) the composition is skewed to polar residues. The segment covering 337-357 (KKDWNKKEPVAGSPFDRRETG) has biased composition (basic and acidic residues). A phosphoserine mark is found at Ser-349 and Ser-416. 5 C2H2-type zinc fingers span residues 446–468 (YVCI…VETH), 509–531 (FKCS…EKTH), 537–559 (FPCN…MRSH), 565–587 (FACD…MRVH), and 593–615 (YECQ…LRMH).

Belongs to the krueppel C2H2-type zinc-finger protein family. Hic subfamily. As to quaternary structure, self-associates. Interacts with HIC1.

Its subcellular location is the nucleus. Functionally, transcriptional repressor. This chain is Hypermethylated in cancer 2 protein (Hic2), found in Mus musculus (Mouse).